A 432-amino-acid polypeptide reads, in one-letter code: Trigger factor (432 aa).

The 86-residue stretch at 161 to 246 (GKRVSIDFVG…VNKVEARQLP (86 aa)) folds into the PPIase FKBP-type domain.

Belongs to the FKBP-type PPIase family. Tig subfamily.

The protein resides in the cytoplasm. The catalysed reaction is [protein]-peptidylproline (omega=180) = [protein]-peptidylproline (omega=0). Its function is as follows. Involved in protein export. Acts as a chaperone by maintaining the newly synthesized protein in an open conformation. Functions as a peptidyl-prolyl cis-trans isomerase. The chain is Trigger factor from Vibrio vulnificus (strain YJ016).